The following is a 233-amino-acid chain: Probable RNA 2'-phosphotransferase (233 aa).

The protein belongs to the KptA/TPT1 family.

Removes the 2'-phosphate from RNA via an intermediate in which the phosphate is ADP-ribosylated by NAD followed by a presumed transesterification to release the RNA and generate ADP-ribose 1''-2''-cyclic phosphate (APPR&gt;P). May function as an ADP-ribosylase. The polypeptide is Probable RNA 2'-phosphotransferase (Hyperthermus butylicus (strain DSM 5456 / JCM 9403 / PLM1-5)).